A 175-amino-acid polypeptide reads, in one-letter code: Protein UPS1, mitochondrial (175 aa).

The tract at residues 1–80 (MVLLHKSTHI…RGITETWIIE (80 aa)) is required for mitochondrial targeting. Residues 2–172 (VLLHKSTHIF…VIQKLEEARN (171 aa)) form the PRELI/MSF1 domain. Positions 26, 58, 148, and 152 each coordinate a 1,2-diacyl-sn-glycero-3-phosphate.

This sequence belongs to the slowmo family. As to quaternary structure, interacts with MDM35. Found associated with a 170 kDa complex.

It localises to the mitochondrion inner membrane. Its subcellular location is the mitochondrion intermembrane space. Its function is as follows. Required for maintenance of normal mitochondrial morphology. Required for PCP1-dependent processing of MGM1. The UPS1:MDM35 complex mediates the transfer of phosphatidic acid (PA) between liposomes and probably functions as a PA transporter across the mitochondrion intermembrane space. Phosphatidic acid release requires dissociation of the UPS1:MDM35 complex. Phosphatidic acid import is required for cardiolipin (CL) synthesis in the mitochondrial inner membrane. With UPS2, controls the level of cardiolipin in mitochondria. Cardiolipin is a unique phospholipid with four fatty acid chains and is present mainly in the mitochondrial inner membrane where it stabilizes the electron transport chain supercomplex between complexes III and IV through direct interaction of their subunits. The polypeptide is Protein UPS1, mitochondrial (UPS1) (Saccharomyces cerevisiae (strain ATCC 204508 / S288c) (Baker's yeast)).